The following is a 504-amino-acid chain: Sucrose phosphorylase (504 aa).

Substrate is bound at residue aspartate 50. Residues histidine 88, 190–192, glutamate 232, 289–290, 342–345, and arginine 399 each bind sucrose; these read RLD, HD, and DLYQ. Residue aspartate 192 is the Nucleophile of the active site. The Proton donor role is filled by glutamate 232.

The protein belongs to the glycosyl hydrolase 13 family. Sucrose phosphorylase subfamily. In terms of assembly, homodimer.

The enzyme catalyses sucrose + phosphate = D-fructose + alpha-D-glucose 1-phosphate. In terms of biological role, catalyzes the reversible phosphorolysis of sucrose into alpha-D-glucose 1-phosphate (Glc1P) and D-fructose. Is involved in sucrose degradation. Also displays transglucosylation activity in vitro, by transferring the glucosyl moiety of Glc1P to a broad range of monomeric sugars, such as D- and L-arabinose, D- and L-arabitol, and xylitol. The protein is Sucrose phosphorylase of Bifidobacterium adolescentis (strain ATCC 15703 / DSM 20083 / NCTC 11814 / E194a).